A 548-amino-acid chain; its full sequence is SH2/SH3 adapter protein dreadlocks (548 aa).

Disordered regions lie at residues 12 to 37 (IPDS…QHQN), 57 to 92 (QVPV…TASS), and 113 to 146 (GSGS…MKHG). Residues 20–37 (QQYPQQQQHPPQLPQHQN) show a composition bias toward low complexity. Positions 113-122 (GSGSANGSGS) are enriched in gly residues. A compositionally biased stretch (low complexity) spans 123–135 (GNSSSGSAAGNAG). The SH3 1 domain occupies 150–209 (DDVCYVVAKYDYAAQGAQELDLRKNERYLLLDDSKHWWRVQNSRNQSGYVPSNYVKKEKP). A disordered region spans residues 219–247 (VKKGSGSKTLPNCSPSRQVESPTMSRRLP). The span at 227 to 242 (TLPNCSPSRQVESPTM) shows a compositional bias: polar residues. SH3 domains follow at residues 252-311 (EAIG…EDCD) and 324-386 (NVLD…ELND). The interval 398 to 442 (SAGNGNGGGSNGGAGGGGGNDSMERRNEGNKPAAQSSGQPIERPN) is disordered. The span at 401 to 417 (NGNGGGSNGGAGGGGGN) shows a compositional bias: gly residues. In terms of domain architecture, SH2 spans 448 to 542 (WYYGAITRSQ…GEKLYLVRSL (95 aa)).

As to quaternary structure, interacts (via SH2 and SH3 domains) with Dscam1 (via cytoplasmic domain); the interaction is direct and requires Dscam1 to be phosphorylated. Interacts (via SH2 and SH3 domains) with InR/Insulin-like receptor (via C-terminal cytoplasmic region); the interaction requires InR kinase activity, probably for autophosphorylation stimulated by insulin signaling. Interacts with Ptp61F (via C-terminus); this interaction is independent of insulin stimulation. Interacts (via SH3 domain 2) with Pak (via N-terminal PXXP motif). In terms of processing, phosphorylated by Src42A and possibly by other tyrosine kinases. Constitutively dephosphorylated by its binding partner Ptp61F.

It is found in the perikaryon. The protein localises to the cell projection. It localises to the axon. The protein resides in the growth cone. Functionally, adapter protein that links cell surface receptor tyrosine phosphorylation to downstream signaling pathways and effectors, many of which are involved in regulation of the actin cytoskeleton. Recruited by Dscam1/Down syndrome cell adhesion molecule homolog and InR/insulin-like receptor. Recruits Pak to membranes, probably when dock/dreadlocks is associated with activated receptors. Required for guidance and targeting of photoreceptor (R cell) axon projections but not for axon outgrowth, differentiation or target induction in the developing eye. As part of a signaling pathway that involves the lbm/late bloomer protein, involved in synapse formation of the RP3 motorneuron at the muscle 7/6 cleft, probably by stimulating axon defasciculation from other SNb neurons. The protein is SH2/SH3 adapter protein dreadlocks of Drosophila melanogaster (Fruit fly).